The primary structure comprises 160 residues: uncharacterized protein (160 aa).

Residues 37-110 (LMSLKPKEDI…TDYLKLYTIY (74 aa)) enclose the Cupin type-2 domain.

It localises to the virion. This is an uncharacterized protein from Acanthamoeba polyphaga mimivirus (APMV).